A 128-amino-acid chain; its full sequence is Large ribosomal subunit protein bL12 (128 aa).

Belongs to the bacterial ribosomal protein bL12 family. As to quaternary structure, homodimer. Part of the ribosomal stalk of the 50S ribosomal subunit. Forms a multimeric L10(L12)X complex, where L10 forms an elongated spine to which 2 to 4 L12 dimers bind in a sequential fashion. Binds GTP-bound translation factors.

In terms of biological role, forms part of the ribosomal stalk which helps the ribosome interact with GTP-bound translation factors. Is thus essential for accurate translation. In Corynebacterium aurimucosum (strain ATCC 700975 / DSM 44827 / CIP 107346 / CN-1) (Corynebacterium nigricans), this protein is Large ribosomal subunit protein bL12.